The following is a 320-amino-acid chain: Glutathione synthetase (320 aa).

Residues 130 to 315 (KIFTSWFPDL…ITGMLLDYIE (186 aa)) form the ATP-grasp domain. 156–212 (WEKYQDIIIKPLDAMGGANIFRIKKNDPNFSVIVENMTNYERKYCMVQNYLPEIKLG) provides a ligand contact to ATP. Mg(2+)-binding residues include Glu-286 and Asn-288.

Belongs to the prokaryotic GSH synthase family. The cofactor is Mg(2+). Mn(2+) serves as cofactor.

The enzyme catalyses gamma-L-glutamyl-L-cysteine + glycine + ATP = glutathione + ADP + phosphate + H(+). Its pathway is sulfur metabolism; glutathione biosynthesis; glutathione from L-cysteine and L-glutamate: step 2/2. The polypeptide is Glutathione synthetase (Buchnera aphidicola subsp. Acyrthosiphon pisum (strain APS) (Acyrthosiphon pisum symbiotic bacterium)).